The primary structure comprises 362 residues: MLSKFYYCKMRKGKSPSSFFSLHKKYLLTGVTILSFIFMFQYKYHEVLTVYEDKTNVQQSSRLFWTRLLFGRTRSRITGRIFNIEIPHSSRLYVYNFFIKYLNINKEEIKYPIESYKSLGDFFSRYIREDTRPIGDLNEYSIVSPCDSEIVDFGELTSNYLDNVKGIKFNIKTFLGSDMIKKYNDDSTSFYYAIFYLSPKKYHHFHAPFNFKYKIRRHISGEVFPVFQGMFKIINNLFDINERVILSGEWKGGHVYYAAISAYNVGNIKIVNDEDLLTNNLRTQLSYMGGDINTKIYDHYKDLEIGDEVGEFKVGSSIIVIFENKKNFKWNVKPNQQISVGERIGGVDQPKQPQNKFIKIRS.

A helical membrane pass occupies residues 26 to 44 (YLLTGVTILSFIFMFQYKY). Active-site charge relay system; for autoendoproteolytic cleavage activity residues include Asp147, His206, and Ser316. Ser316 functions as the Schiff-base intermediate with substrate; via pyruvic acid; for decarboxylase activity in the catalytic mechanism. Ser316 is modified (pyruvic acid (Ser); by autocatalysis).

It belongs to the phosphatidylserine decarboxylase family. PSD-B subfamily. Eukaryotic type I sub-subfamily. Heterodimer of a large membrane-associated beta subunit and a small pyruvoyl-containing alpha subunit. Pyruvate is required as a cofactor. Post-translationally, is synthesized initially as an inactive proenzyme. Formation of the active enzyme involves a self-maturation process in which the active site pyruvoyl group is generated from an internal serine residue via an autocatalytic post-translational modification. Two non-identical subunits are generated from the proenzyme in this reaction, and the pyruvate is formed at the N-terminus of the alpha chain, which is derived from the carboxyl end of the proenzyme. The autoendoproteolytic cleavage occurs by a canonical serine protease mechanism, in which the side chain hydroxyl group of the serine supplies its oxygen atom to form the C-terminus of the beta chain, while the remainder of the serine residue undergoes an oxidative deamination to produce ammonia and the pyruvoyl prosthetic group on the alpha chain. During this reaction, the Ser that is part of the protease active site of the proenzyme becomes the pyruvoyl prosthetic group, which constitutes an essential element of the active site of the mature decarboxylase.

It localises to the endoplasmic reticulum membrane. It catalyses the reaction a 1,2-diacyl-sn-glycero-3-phospho-L-serine + H(+) = a 1,2-diacyl-sn-glycero-3-phosphoethanolamine + CO2. The protein operates within phospholipid metabolism; phosphatidylethanolamine biosynthesis; phosphatidylethanolamine from CDP-diacylglycerol: step 2/2. Catalyzes the formation of phosphatidylethanolamine (PtdEtn) from phosphatidylserine (PtdSer). Plays a central role in phospholipid metabolism and in the interorganelle trafficking of phosphatidylserine. The chain is Phosphatidylserine decarboxylase proenzyme from Plasmodium falciparum.